Reading from the N-terminus, the 111-residue chain is Cell division topological specificity factor (111 aa).

It belongs to the MinE family.

Prevents the cell division inhibition by proteins MinC and MinD at internal division sites while permitting inhibition at polar sites. This ensures cell division at the proper site by restricting the formation of a division septum at the midpoint of the long axis of the cell. In Prochlorococcus marinus (strain MIT 9312), this protein is Cell division topological specificity factor.